The following is a 105-amino-acid chain: MPKKVLTGVVVSDKMQKTVTVLVERQFPHPLYGKVIKRSKKYLAHDPEEKYKLGDVVEIIESRPISKRKRFRVLRLVESGRMDLVEKYLIRRQNYQSLSKRGGKA.

It belongs to the universal ribosomal protein uS17 family. In terms of assembly, part of the 30S ribosomal subunit.

Functionally, one of the primary rRNA binding proteins, it binds specifically to the 5'-end of 16S ribosomal RNA. This chain is Small ribosomal subunit protein uS17, found in Thermus thermophilus (strain ATCC BAA-163 / DSM 7039 / HB27).